Reading from the N-terminus, the 313-residue chain is MEKRKIILDCDPGHDDAIAIMMAAKHPAIDLLGITIVAGNQTLDKTLINGLNVCQKLEINVPVYAGMPQPIMRQQIVADNIHGETGLDGPVFEPLTRQAENTHAVKYIIDTLMASDGDITLVPVGPLSNIAVAMRMQPAILPKIREIVLMGGAYGTGNFTPSAEFNIFADPEAARVVFTSGVPLVMMGLDLTNQTVCTPDVIARMERAGGPAGELFSDIMNFTLKTQFENYGLAGGPVHDATCIGYLINPDGIKTQEMYVEVDVNSGPCYGRTVCDELGVLGKPANTKVGITIDTDWFWGLVEECVRGYIKTH.

Residue aspartate 11 is the Proton acceptor of the active site. Positions 11, 16, and 124 each coordinate Ca(2+). 2 residues coordinate substrate: glutamine 227 and histidine 239. A Ca(2+)-binding site is contributed by aspartate 240.

It belongs to the IUNH family. RihB subfamily. Homotetramer. The cofactor is Ca(2+).

The enzyme catalyses a pyrimidine ribonucleoside + H2O = a pyrimidine nucleobase + D-ribose. In terms of biological role, hydrolyzes cytidine or uridine to ribose and cytosine or uracil, respectively. Has a clear preference for cytidine over uridine. Strictly specific for ribonucleosides. The sequence is that of Pyrimidine-specific ribonucleoside hydrolase RihB from Escherichia coli O1:K1 / APEC.